The following is a 219-amino-acid chain: Phosphatidylserine decarboxylase proenzyme (219 aa).

Serine 188 serves as the catalytic Schiff-base intermediate with substrate; via pyruvic acid. Serine 188 is subject to Pyruvic acid (Ser); by autocatalysis.

This sequence belongs to the phosphatidylserine decarboxylase family. PSD-A subfamily. Heterodimer of a large membrane-associated beta subunit and a small pyruvoyl-containing alpha subunit. The cofactor is pyruvate. Is synthesized initially as an inactive proenzyme. Formation of the active enzyme involves a self-maturation process in which the active site pyruvoyl group is generated from an internal serine residue via an autocatalytic post-translational modification. Two non-identical subunits are generated from the proenzyme in this reaction, and the pyruvate is formed at the N-terminus of the alpha chain, which is derived from the carboxyl end of the proenzyme. The post-translation cleavage follows an unusual pathway, termed non-hydrolytic serinolysis, in which the side chain hydroxyl group of the serine supplies its oxygen atom to form the C-terminus of the beta chain, while the remainder of the serine residue undergoes an oxidative deamination to produce ammonia and the pyruvoyl prosthetic group on the alpha chain.

Its subcellular location is the cell membrane. It carries out the reaction a 1,2-diacyl-sn-glycero-3-phospho-L-serine + H(+) = a 1,2-diacyl-sn-glycero-3-phosphoethanolamine + CO2. It participates in phospholipid metabolism; phosphatidylethanolamine biosynthesis; phosphatidylethanolamine from CDP-diacylglycerol: step 2/2. Functionally, catalyzes the formation of phosphatidylethanolamine (PtdEtn) from phosphatidylserine (PtdSer). This is Phosphatidylserine decarboxylase proenzyme from Geobacter sp. (strain M21).